A 396-amino-acid polypeptide reads, in one-letter code: Tryptophan synthase beta chain (396 aa).

Lys86 is modified (N6-(pyridoxal phosphate)lysine).

This sequence belongs to the TrpB family. In terms of assembly, tetramer of two alpha and two beta chains. The cofactor is pyridoxal 5'-phosphate.

It catalyses the reaction (1S,2R)-1-C-(indol-3-yl)glycerol 3-phosphate + L-serine = D-glyceraldehyde 3-phosphate + L-tryptophan + H2O. Its pathway is amino-acid biosynthesis; L-tryptophan biosynthesis; L-tryptophan from chorismate: step 5/5. Its function is as follows. The beta subunit is responsible for the synthesis of L-tryptophan from indole and L-serine. This chain is Tryptophan synthase beta chain, found in Pectobacterium carotovorum subsp. carotovorum (strain PC1).